We begin with the raw amino-acid sequence, 315 residues long: Calumenin (315 aa).

The N-terminal stretch at 1–19 (MDLRQFLMCLSLCTAFALS) is a signal peptide. At tyrosine 47 the chain carries Phosphotyrosine. The residue at position 65 (threonine 65) is a Phosphothreonine. EF-hand domains are found at residues 68–103 (ESKE…AQKK), 104–139 (YIYD…TYLD), 151–186 (PIMV…EEYD), 188–223 (MKDI…HDGN), 229–264 (WVKT…SDYD), and 265–300 (HAEA…FVGS). Residue serine 69 is modified to Phosphoserine. Positions 81, 83, 85, 92, 117, 119, 121, and 128 each coordinate Ca(2+). N-linked (GlcNAc...) asparagine glycosylation is present at asparagine 131. The Ca(2+) site is built by aspartate 164, aspartate 166, aspartate 168, glutamate 175, aspartate 201, asparagine 203, aspartate 205, glutamate 212, aspartate 242, asparagine 244, aspartate 246, lysine 248, and glutamate 253. A Phosphothreonine modification is found at threonine 254. Phosphoserine is present on residues serine 261 and serine 277. Residues aspartate 278, aspartate 280, aspartate 282, lysine 284, and glutamate 289 each contribute to the Ca(2+) site. Positions 312-315 (HDEF) match the Prevents secretion from ER motif.

It belongs to the CREC family. Binds crotoxin. Interacts with GGCX.

It localises to the endoplasmic reticulum membrane. The protein localises to the golgi apparatus. Its subcellular location is the secreted. It is found in the melanosome. The protein resides in the sarcoplasmic reticulum lumen. Its function is as follows. Involved in regulation of vitamin K-dependent carboxylation of multiple N-terminal glutamate residues. Seems to inhibit gamma-carboxylase GGCX. Binds 7 calcium ions with a low affinity. This is Calumenin (Calu) from Rattus norvegicus (Rat).